The primary structure comprises 89 residues: Acyl carrier protein MbtL (89 aa).

The Carrier domain maps to 7 to 82 (ESVSAALTEI…DLEAAIQAKV (76 aa)). The residue at position 42 (Ser-42) is an O-(pantetheine 4'-phosphoryl)serine.

In terms of processing, 4'-phosphopantetheine is transferred from CoA to a specific serine of apo-ACP, leading to the activated holo-ACP form.

It is found in the cytoplasm. The protein operates within siderophore biosynthesis; mycobactin biosynthesis. Acyl carrier protein involved in the formation of acyl-S-ACP intermediates within the mycobactin biosynthesis process. This chain is Acyl carrier protein MbtL (mbtL), found in Mycobacterium sp. (strain MCS).